Consider the following 367-residue polypeptide: MKKQRIVVKIGSSSLADSHGGISKEQLSDHVAALARLKEEGHEVLLITSGAVAAGFSALGYPSRPVTIKGKQAAAAVGQSLLMQAYTEEFRKYGIVTAQLLLTRSDFSRKEQYSNAYATLGELLNRSALPIINENDSISLEELTFGDNDMLSALVSGLVSADMLMIFTDVNGLYDKNPQKNEDAKKYYFLPEVTEEIASLAGDAGSKLGTGGMKSKIDAAKTALSLGVSVFIGTGRGQEKFVDVLKGKGDGTYVGNAPQKEIKMNKQWIALHSVVSGQIEIDAGAATAIIQHGKSLLPAGVTNVSGFFKVGDVVEVMTQQGRVIGKGQCTYSAEELREIKGMQSQHIQARGERHNYEVIHRDHWVSL.

An ATP-binding site is contributed by Lys9. Residues Ser49, Asp136, and Asn148 each coordinate substrate. ATP contacts are provided by residues 168-169 (TD) and 210-216 (TGGMKSK). Positions 276–350 (SGQIEIDAGA…GMQSQHIQAR (75 aa)) constitute a PUA domain.

Belongs to the glutamate 5-kinase family.

The protein resides in the cytoplasm. The enzyme catalyses L-glutamate + ATP = L-glutamyl 5-phosphate + ADP. The protein operates within amino-acid biosynthesis; L-proline biosynthesis; L-glutamate 5-semialdehyde from L-glutamate: step 1/2. In terms of biological role, catalyzes the transfer of a phosphate group to glutamate to form L-glutamate 5-phosphate. In Bacillus cereus (strain ATCC 10987 / NRS 248), this protein is Glutamate 5-kinase.